The primary structure comprises 1392 residues: Ankyrin repeat domain-containing protein 30B (1392 aa).

Residues Met-1–Phe-21 form a disordered region. 5 ANK repeats span residues Lys-72 to Val-101, Glu-105 to Tyr-134, Tyr-138 to Val-167, Ala-171 to Ala-200, and Ser-204 to Ala-233. Disordered stretches follow at residues Pro-265–Pro-292, Ala-558–Lys-587, Asp-636–Gly-656, Arg-671–Gly-690, Lys-830–Glu-877, and Gly-904–Val-926. Polar residues-rich tracts occupy residues Asn-267–Thr-280 and Asp-576–Gln-586. Residues Asp-636–Leu-650 show a composition bias toward basic and acidic residues. The span at Lys-830–Gln-840 shows a compositional bias: polar residues. Composition is skewed to basic and acidic residues over residues Leu-864–Ser-874 and Gly-904–His-915. Coiled coils occupy residues Arg-960–Lys-1168 and Glu-1270–Val-1318.

In terms of tissue distribution, expressed in brain, breast and testis.

This is Ankyrin repeat domain-containing protein 30B (ANKRD30B) from Homo sapiens (Human).